The primary structure comprises 1118 residues: MNALTVIPYAEFGIQSNFSFLRGASKPEELVVAAKLMGFSAIGLADRNTVAGVVRAWQQAKVEKLAYHPGCRLVFGDGTPDILAYPRNRAGWGHLCRMLTQANLRDETEKGATLLQRDDLLEWGDLMSLAVLPDLAAGAEDSLALLGQIKDRFGRALRLGVSPCYAGYDRFRIEQAAALAQVAGIPLMATNDVLYHTAERRPLQDVLTAIRLNTPVAEVGLELSANAERHLKPPLEMARLFRRHPQALAETLRFAEELTFSLSDLQYNYPDEPTESGLGPQAELERLAREGAARRYPSGVPHSVIKRIEEELALIERLNYARYFLTVYDIVKYARSQDILCQGRGSAANSIVCFCIGITEVGPDRIDTLFERFISEERNEPPDIDVDFEHEKRETVIQYIYEKYSSKRTALAAAVISYRGRSALREVSKAMGLSEDVRASLSGSIWGWSTSEVGEKEARAGGLDRSDPTSRHVMERANEIMGFPRHLSQHVGGFVITKDRLDEIVPIVKTAMDERKMVEWDKDDLDAVKILKVDVLALGMLTCLQRAFILLTDHYPKARDPYGQPYVLASLPPEDKRVYDMIGRADTLGVFQIESRAQMSMLPRLKPKDFYDLVIEVAIVRPGPIQGDMVHPYLRRRQGKEKPEYQKPELEAILSKTLGVPLFQEQAMKIAIVAGGFRPGEADELRRAMATFKRTGTIGNYRQRMIDGMVGKGYTKDFAERCFKQIEGFGEYGFPESHAASFALLVYASCWFKTFYPDVFCAAILNSQPMGFYQPAQLVRDARDHGVDIREVDVNCSAWDCTLEKVPFDPARILPRHADMRGVIETNHAVRLGFRQIKGLSKERMEDFAKRRGSGYETVRDVWLRSGLDVDEIERLAQADAFRSIGLDRRAALWEVRALGAKSAAEKLPLFDQPALRLRELEPETKLPKMPLGEHVIHDYRSLGLSLKAHPVAFLRERLDRAGVTPNANLPSQRDGRRVSVAGLVLVRQRPGKGNAIFLTLEDDKAVANVIFWERTFTRFRPIVMGARFVKVSGKLQSESGVIHIVAEKIEDLTPWLTVLLEKVSGAGAPGPQPMGYAKEVGSDRRSRPEIGNAPARQDLATLSEEAEQVMPKGRNFQ.

Positions 1071 to 1118 are disordered; it reads GPQPMGYAKEVGSDRRSRPEIGNAPARQDLATLSEEAEQVMPKGRNFQ.

It belongs to the DNA polymerase type-C family. DnaE2 subfamily.

It localises to the cytoplasm. The enzyme catalyses DNA(n) + a 2'-deoxyribonucleoside 5'-triphosphate = DNA(n+1) + diphosphate. DNA polymerase involved in damage-induced mutagenesis and translesion synthesis (TLS). It is not the major replicative DNA polymerase. This chain is Error-prone DNA polymerase, found in Mesorhizobium japonicum (strain LMG 29417 / CECT 9101 / MAFF 303099) (Mesorhizobium loti (strain MAFF 303099)).